The following is a 143-amino-acid chain: Pathogenesis-related protein P2 (143 aa).

Residues 1 to 23 form the signal peptide; it reads MERVNKLCVAFFVINMMMAVAAA. Residues 24–143 enclose the Barwin domain; it reads QSATNVRATY…LNVNYEFVNC (120 aa). 3 disulfide bridges follow: C52–C84, C73–C107, and C87–C143.

The protein resides in the secreted. The protein localises to the cell wall. In Solanum lycopersicum (Tomato), this protein is Pathogenesis-related protein P2.